A 247-amino-acid chain; its full sequence is Aspartate/glutamate leucyltransferase (247 aa).

It belongs to the R-transferase family. Bpt subfamily.

The protein localises to the cytoplasm. It carries out the reaction N-terminal L-glutamyl-[protein] + L-leucyl-tRNA(Leu) = N-terminal L-leucyl-L-glutamyl-[protein] + tRNA(Leu) + H(+). The catalysed reaction is N-terminal L-aspartyl-[protein] + L-leucyl-tRNA(Leu) = N-terminal L-leucyl-L-aspartyl-[protein] + tRNA(Leu) + H(+). Functionally, functions in the N-end rule pathway of protein degradation where it conjugates Leu from its aminoacyl-tRNA to the N-termini of proteins containing an N-terminal aspartate or glutamate. The protein is Aspartate/glutamate leucyltransferase of Chromohalobacter salexigens (strain ATCC BAA-138 / DSM 3043 / CIP 106854 / NCIMB 13768 / 1H11).